A 125-amino-acid chain; its full sequence is Calcitonin gene-related peptide 1 (125 aa).

An N-terminal signal peptide occupies residues 1–25; that stretch reads MVMLKISSFLAVYALVVCQMDSFQA. Positions 26-77 are excised as a propeptide; the sequence is APVRPGLESITDRVTLSDYEARRLLNALVKDFIQMTAEELEQASEGNSVTAQ. Cys81 and Cys86 are joined by a disulfide. Residue Phe116 is modified to Phenylalanine amide. Residues 122-125 constitute a propeptide that is removed on maturation; it reads SVQI.

It belongs to the calcitonin family.

It localises to the secreted. Its function is as follows. CGRP1/CALCA is a peptide hormone that induces vasodilation mediated by the CALCRL-RAMP1 receptor complex. Dilates a variety of vessels including the coronary, cerebral and systemic vasculature. Its abundance in the CNS also points toward a neurotransmitter or neuromodulator role. It also elevates platelet cAMP. CGRP1 can also bind and activate CALCR-RAMP1 (AMYR1) receptor complex. The protein is Calcitonin gene-related peptide 1 (CALCA) of Gallus gallus (Chicken).